A 316-amino-acid polypeptide reads, in one-letter code: MLTQLKKNGTEVSRATALFSSFVEKNKVKCPGNVKKFVFLCGANKNNGEPSARRLELINFSERYLNNCHFFLAELVFKELSTDEESLSDNLLDIEADLSKLADHIIIVLESYSSFTELGAFAYSKQLRKKLIIVNNTKFINEKSFINMGPIKAITQQSQQSGHFLHYKMTEGIESIERSDGIGEIFDPLYDILSKNDRAISRTLKKEELDPSSNFNKDSVRFIHDVIFVCGPLQLNELIEIITKIFGTESHYKKNLLKHLGILIAIRIISCTNGIYYSLYKEYYFKYDFDIDNISSMFKVFFLKNKPERMRVYENI.

Functionally, possible ribosyltransferase/DNA-binding component of antiviral defense system retron Ec73, composed of a non-coding RNA (ncRNA) followed by this protein then a reverse transcriptase (RT). Expression of this retron confers protection against bacteriophages SECphi4, SECphi6, SECphi27 and P1. At multiplicity of infection (MOI) of 0.02 cultures grow normally when infected with SECphi4 without collapsing, at MOI 2 cultures enter growth stasis. The chain is Retron Ec73 putative ribosyltransferase/DNA-binding protein from Escherichia coli.